We begin with the raw amino-acid sequence, 550 residues long: Glypican-1 (550 aa).

Positions 1-20 (MRFFPWGFWLLCVASAPARG) are cleaved as a signal peptide. 7 disulfide bridges follow: Cys29–Cys65, Cys59–Cys253, Cys66–Cys256, Cys188–Cys340, Cys243–Cys276, Cys265–Cys412, and Cys269–Cys398. Residues Asn76 and Asn113 are each glycosylated (N-linked (GlcNAc...) asparagine). A glycan (N-linked (GlcNAc...) asparagine) is linked at Asn382. Disordered regions lie at residues 475 to 494 (FQDA…CPDD) and 502 to 522 (KSPS…GHGV). A compositionally biased stretch (low complexity) spans 481–494 (DMSGSGSGDSCPDD). 3 O-linked (Xyl...) (heparan sulfate) serine glycosylation sites follow: Ser483, Ser485, and Ser487. The GPI-anchor amidated glycine moiety is linked to residue Gly524. A propeptide spans 525 to 550 (ASSRSLPSAFLLFLSGASIVVQHLWR) (removed in mature form).

It belongs to the glypican family. Post-translationally, O-glycosylated with heparan sulfate.

It localises to the cell membrane. The protein resides in the endosome. The protein localises to the secreted. Its subcellular location is the extracellular space. Cell surface proteoglycan that bears heparan sulfate. Modulates Wnt-signaling pathway. The sequence is that of Glypican-1 (GPC1) from Gallus gallus (Chicken).